A 424-amino-acid chain; its full sequence is UDP-N-acetylglucosamine 1-carboxyvinyltransferase (424 aa).

22–23 is a binding site for phosphoenolpyruvate; sequence KN. Position 93 (Arg93) interacts with UDP-N-acetyl-alpha-D-glucosamine. Cys117 (proton donor) is an active-site residue. Position 117 is a 2-(S-cysteinyl)pyruvic acid O-phosphothioketal (Cys117). UDP-N-acetyl-alpha-D-glucosamine is bound by residues 122–126, 162–165, Asp307, and Ile329; these read RPVDL and KVSV.

It belongs to the EPSP synthase family. MurA subfamily.

Its subcellular location is the cytoplasm. It carries out the reaction phosphoenolpyruvate + UDP-N-acetyl-alpha-D-glucosamine = UDP-N-acetyl-3-O-(1-carboxyvinyl)-alpha-D-glucosamine + phosphate. The protein operates within cell wall biogenesis; peptidoglycan biosynthesis. Functionally, cell wall formation. Adds enolpyruvyl to UDP-N-acetylglucosamine. The sequence is that of UDP-N-acetylglucosamine 1-carboxyvinyltransferase from Haemophilus influenzae (strain PittEE).